Consider the following 185-residue polypeptide: Protein-lysine palmitoyltransferase CyaC (185 aa).

Catalysis depends on residues His-33 and Asp-102.

This sequence belongs to the RTX toxin acyltransferase family. In terms of assembly, homodimer.

It is found in the cytoplasm. The enzyme catalyses hexadecanoyl-[ACP] + L-lysyl-[protein] = N(6)-hexadecanoyl-L-lysyl-[protein] + holo-[ACP] + H(+). It carries out the reaction (9Z)-hexadecenoyl-[ACP] + L-lysyl-[protein] = N(6)-[(9Z)-hexadecenoyl]-L-lysyl-[protein] + holo-[ACP] + H(+). Its function is as follows. Protein-lysine palmitoyltransferase that catalyzes palmitoylation of the protoxin (CyaA) at two internal lysine residues, thereby converting it to the active toxin. This is Protein-lysine palmitoyltransferase CyaC from Bordetella bronchiseptica (strain ATCC BAA-588 / NCTC 13252 / RB50) (Alcaligenes bronchisepticus).